The chain runs to 585 residues: Switch-associated protein 70 (585 aa).

One can recognise a PH domain in the interval 210 to 306 (DVLKQGYMIK…WIQAIHSTIH (97 aa)). The stretch at 316–532 (HKEARQRRKE…KLEMAAKMTK (217 aa)) forms a coiled coil.

As to quaternary structure, the SWAP complex consists of NPM1, NCL, PARP1 and SWAP70. Post-translationally, tyrosine-phosphorylated.

The protein localises to the cytoplasm. Its subcellular location is the cell membrane. The protein resides in the nucleus. It is found in the cell projection. It localises to the lamellipodium. In terms of biological role, phosphatidylinositol 3,4,5-trisphosphate-dependent guanine nucleotide exchange factor (GEF) which, independently of RAS, transduces signals from tyrosine kinase receptors to RAC. It also mediates signaling of membrane ruffling. Regulates the actin cytoskeleton as an effector or adapter protein in response to agonist stimulated phosphatidylinositol (3,4)-bisphosphate production and cell protrusion. The sequence is that of Switch-associated protein 70 (SWAP70) from Bos taurus (Bovine).